The primary structure comprises 443 residues: Autophagy-related protein 13 homolog (443 aa).

Disordered stretches follow at residues 232 to 283 and 308 to 333; these read AKKR…EEDH and ANGTKKNSSSTCLNSPKSTPEDKEPT. A compositionally biased stretch (polar residues) spans 240-253; the sequence is SVESATSAGSSTSR. Residues 268-283 show a composition bias toward basic and acidic residues; sequence EDSRHSDVQNSYEEDH. Residues 308–325 show a composition bias toward polar residues; sequence ANGTKKNSSSTCLNSPKS.

It belongs to the ATG13 family. Metazoan subfamily. Interacts with unc-51 (via C-terminus). Interacts with lgg-1; the interaction is direct.

Its subcellular location is the cytoplasm. The protein resides in the cytosol. It localises to the preautophagosomal structure. It is found in the perikaryon. The protein localises to the cell projection. Its subcellular location is the axon. Functionally, component of the unc-51/atg-13 complex required for autophagosome formation. Required for the degradation of germ cell specific P-granule components such as sepa-1 by autophagy in somatic cells. This ensures exclusive localization of the P-granules in germ cells. May function downstream of the let-363 (Tor) signaling pathway to mediate sepa-1 degradation. Plays a role in survival during limited food availability. This is Autophagy-related protein 13 homolog from Caenorhabditis elegans.